Here is a 273-residue protein sequence, read N- to C-terminus: Putative pyruvate, phosphate dikinase regulatory protein (273 aa).

ADP is bound at residue 153 to 160 (GVSRTSKS).

It belongs to the pyruvate, phosphate/water dikinase regulatory protein family. PDRP subfamily.

The catalysed reaction is N(tele)-phospho-L-histidyl/L-threonyl-[pyruvate, phosphate dikinase] + ADP = N(tele)-phospho-L-histidyl/O-phospho-L-threonyl-[pyruvate, phosphate dikinase] + AMP + H(+). The enzyme catalyses N(tele)-phospho-L-histidyl/O-phospho-L-threonyl-[pyruvate, phosphate dikinase] + phosphate + H(+) = N(tele)-phospho-L-histidyl/L-threonyl-[pyruvate, phosphate dikinase] + diphosphate. Its function is as follows. Bifunctional serine/threonine kinase and phosphorylase involved in the regulation of the pyruvate, phosphate dikinase (PPDK) by catalyzing its phosphorylation/dephosphorylation. This chain is Putative pyruvate, phosphate dikinase regulatory protein, found in Ehrlichia ruminantium (strain Welgevonden).